Consider the following 360-residue polypeptide: Variable large protein 14 (360 aa).

The signal sequence occupies residues 1-18; it reads MRKRISAIIMTLFMVLAS. The N-palmitoyl cysteine moiety is linked to residue Cys-19. A lipid anchor (S-diacylglycerol cysteine) is attached at Cys-19.

This sequence belongs to the variable large protein (Vlp) family. Beta subfamily.

It is found in the cell outer membrane. Functionally, the Vlp and Vsp proteins are antigenically distinct proteins, only one vlp or vsp gene is transcriptionally active at any one time. Switching between these genes is a mechanism of host immune response evasion. In Borrelia hermsii, this protein is Variable large protein 14.